The sequence spans 869 residues: Facilitated trehalose transporter Tret1 (869 aa).

2 disordered regions span residues 1–214 (MSGR…QKAT) and 258–315 (KESS…LIHR). Over 1-404 (MSGRDNRGAG…VYRPTTNPIY (404 aa)) the chain is Cytoplasmic. Positions 25 to 43 (KLKEKLTRAGDDQGYHRVE) are enriched in basic and acidic residues. Composition is skewed to low complexity over residues 44–57 (SNLS…SLDT), 79–92 (PQQQ…QQLR), and 118–127 (PFQQQQQRTP). 2 stretches are compositionally biased toward basic and acidic residues: residues 147 to 156 (EIREHRDRQQ) and 258 to 291 (KESS…KLDK). Residues S260, S261, S262, S332, and S334 each carry the phosphoserine modification. The interval 336 to 368 (EDFHTSRQHFQQQRSISTDSRKSRRPYEMDEMG) is disordered. Polar residues predominate over residues 343-353 (QHFQQQRSIST). The span at 354 to 368 (DSRKSRRPYEMDEMG) shows a compositional bias: basic and acidic residues. A helical transmembrane segment spans residues 405 to 425 (IWTQVLAALSVSLGSLVVGFV). Over 426 to 452 (SAYTSPALVSMTNRNMTSFEVTPQAAS) the chain is Extracellular. N440 carries an N-linked (GlcNAc...) asparagine glycan. Residues 453–473 (WVGGIMPLAGLAGGIAGGPFI) form a helical membrane-spanning segment. Topologically, residues 474–485 (EYLGRRNTILAT) are cytoplasmic. Residues 486–506 (AIPFIVSSLLIACAVNVAMVL) traverse the membrane as a helical segment. The Extracellular portion of the chain corresponds to 507–509 (AGR). Residues 510–530 (FLAGFCVGIASLSLPVYLGET) form a helical membrane-spanning segment. Residues 531–536 (VQPEVR) lie on the Cytoplasmic side of the membrane. A helical membrane pass occupies residues 537–557 (GTLGLLPTAFGNIGILLCFVA). Residues 558–564 (GTYMDWS) lie on the Extracellular side of the membrane. Residues 565 to 585 (MLAFLGAALPVPFLILMFLIP) traverse the membrane as a helical segment. The Cytoplasmic segment spans residues 586 to 654 (ETPRWFVSRG…NLKPLSISLG (69 aa)). The helical transmembrane segment at 655 to 675 (LMFFQQLSGINAVIFYTVSIF) threads the bilayer. Residues 676–685 (KDAGSTIDGN) lie on the Extracellular side of the membrane. Residues 686-706 (LCTIIVGIVNFMATFIATLLI) form a helical membrane-spanning segment. Residues 707 to 712 (DRAGRK) are Cytoplasmic-facing. A helical transmembrane segment spans residues 713 to 733 (ILLYVSNIAMIITLFVLGGFF). Over 734 to 752 (YCKSHGQDVSQLGWLPLSC) the chain is Extracellular. Residues 753–773 (FVIYILGFSLGFGPIPWLMMG) form a helical membrane-spanning segment. Topologically, residues 774-779 (EILPSK) are cytoplasmic. The helical transmembrane segment at 780–800 (IRGSAASVATAFNWSCTFVVT) threads the bilayer. Residues 801 to 813 (KTFQDMIDFMGAH) lie on the Extracellular side of the membrane. The helical transmembrane segment at 814–834 (GAFWLFGSICFIGLFFVILYV) threads the bilayer. At 835-869 (PETQGKTLEDIERKMMGRVRRMSSVANMKPLAFNM) the chain is on the cytoplasmic side. Residues S857 and S858 each carry the phosphoserine modification.

The protein belongs to the major facilitator superfamily. Sugar transporter (TC 2.A.1.1) family. Trehalose transporter subfamily.

It localises to the cell membrane. Low-capacity facilitative transporter for trehalose. Does not transport maltose, sucrose or lactose. Mediates the bidirectional transfer of trehalose. Responsible for the transport of trehalose synthesized in the fat body and the incorporation of trehalose into other tissues that require a carbon source, thereby regulating trehalose levels in the hemolymph. The protein is Facilitated trehalose transporter Tret1 of Drosophila persimilis (Fruit fly).